The chain runs to 259 residues: Type III pantothenate kinase (259 aa).

An ATP-binding site is contributed by 6-13 (DVGNTNCT). 107-110 (GSDR) is a binding site for substrate. The active-site Proton acceptor is aspartate 109. Aspartate 129 provides a ligand contact to K(+). Threonine 132 serves as a coordination point for ATP. Threonine 184 contacts substrate.

This sequence belongs to the type III pantothenate kinase family. In terms of assembly, homodimer. It depends on NH4(+) as a cofactor. Requires K(+) as cofactor.

Its subcellular location is the cytoplasm. The catalysed reaction is (R)-pantothenate + ATP = (R)-4'-phosphopantothenate + ADP + H(+). It participates in cofactor biosynthesis; coenzyme A biosynthesis; CoA from (R)-pantothenate: step 1/5. Its function is as follows. Catalyzes the phosphorylation of pantothenate (Pan), the first step in CoA biosynthesis. The polypeptide is Type III pantothenate kinase (Listeria monocytogenes serovar 1/2a (strain ATCC BAA-679 / EGD-e)).